Consider the following 180-residue polypeptide: Large ribosomal subunit protein uL16 (180 aa).

This sequence belongs to the universal ribosomal protein uL16 family.

The polypeptide is Large ribosomal subunit protein uL16 (Pyrobaculum aerophilum (strain ATCC 51768 / DSM 7523 / JCM 9630 / CIP 104966 / NBRC 100827 / IM2)).